The primary structure comprises 335 residues: S-adenosylmethionine decarboxylase proenzyme (335 aa).

Catalysis depends on residues glutamate 12 and glutamate 15. Serine 70 functions as the Schiff-base intermediate with substrate; via pyruvic acid in the catalytic mechanism. Position 70 is a pyruvic acid (Ser); by autocatalysis (serine 70). Catalysis depends on cysteine 84, which acts as the Proton donor; for catalytic activity. Residues serine 231 and histidine 245 each act as proton acceptor; for processing activity in the active site.

The protein belongs to the eukaryotic AdoMetDC family. It depends on pyruvate as a cofactor. In terms of processing, is synthesized initially as an inactive proenzyme. Formation of the active enzyme involves a self-maturation process in which the active site pyruvoyl group is generated from an internal serine residue via an autocatalytic post-translational modification. Two non-identical subunits are generated from the proenzyme in this reaction, and the pyruvate is formed at the N-terminus of the alpha chain, which is derived from the carboxyl end of the proenzyme. The post-translation cleavage follows an unusual pathway, termed non-hydrolytic serinolysis, in which the side chain hydroxyl group of the serine supplies its oxygen atom to form the C-terminus of the beta chain, while the remainder of the serine residue undergoes an oxidative deamination to produce ammonia and the pyruvoyl group blocking the N-terminus of the alpha chain.

It catalyses the reaction S-adenosyl-L-methionine + H(+) = S-adenosyl 3-(methylsulfanyl)propylamine + CO2. Its pathway is amine and polyamine biosynthesis; S-adenosylmethioninamine biosynthesis; S-adenosylmethioninamine from S-adenosyl-L-methionine: step 1/1. Functionally, essential for biosynthesis of the polyamines spermidine and spermine. Promotes maintenance and self-renewal of embryonic stem cells, by maintaining spermine levels. The chain is S-adenosylmethionine decarboxylase proenzyme (amd1) from Xenopus laevis (African clawed frog).